The sequence spans 216 residues: Somatotropin (216 aa).

The N-terminal stretch at 1–26 (MAASPRNSVLLAFALLCLPWPQEVGA) is a signal peptide. H45 contacts Zn(2+). A disulfide bridge links C78 with C189. S131 bears the Phosphoserine mark. E198 is a binding site for Zn(2+). C206 and C214 form a disulfide bridge.

The protein belongs to the somatotropin/prolactin family.

The protein localises to the secreted. Functionally, plays an important role in growth control. Its major role in stimulating body growth is to stimulate the liver and other tissues to secrete IGF1. It stimulates both the differentiation and proliferation of myoblasts. It also stimulates amino acid uptake and protein synthesis in muscle and other tissues. This chain is Somatotropin (GH1), found in Canis lupus familiaris (Dog).